The chain runs to 290 residues: Ankyrin repeat and SOCS box protein 9 (290 aa).

Met1 bears the N-acetylmethionine mark. Over residues 1–11 (MDGEQRGRSDR) the composition is skewed to basic and acidic residues. Residues 1–20 (MDGEQRGRSDRPGGSPHLPF) are disordered. ANK repeat units follow at residues 31-60 (SDWS…PVNI), 64-93 (DHVS…QVNG), 97-126 (DWRT…TPHP), 129-158 (ELAS…NIDY), 162-191 (HLGT…SVNQ), and 194-223 (GLDS…NAQA). One can recognise an SOCS box domain in the interval 236–290 (PLESPLIQIFLQNEGPQSLRQLCRLRIRKCFGIRQHHKISELLLPEDLKRFLLHL).

It belongs to the ankyrin SOCS box (ASB) family. As to quaternary structure, substrate-recognition component of the ECS(ASB9) complex, composed of ASB9, CUL5, ELOB, ELOC and RNF7/RBX2.

It localises to the mitochondrion. The protein operates within protein modification; protein ubiquitination. Functionally, substrate-recognition component of a cullin-5-RING E3 ubiquitin-protein ligase complex (ECS complex, also named CRL5 complex), which mediates the ubiquitination and subsequent proteasomal degradation of target proteins. The ECS(ASB9) complex catalyzes ubiquitination of creatine kinases CKB and CKMT1A. The sequence is that of Ankyrin repeat and SOCS box protein 9 from Mus musculus (Mouse).